Consider the following 213-residue polypeptide: Ribonuclease T (213 aa).

An Exonuclease domain is found at 28–202 (VVVDVETGGF…YDTEQTARLF (175 aa)). Mg(2+) is bound by residues Asp31, Glu33, His189, and Asp194. His189 functions as the Proton donor/acceptor in the catalytic mechanism.

This sequence belongs to the RNase T family. In terms of assembly, homodimer. The cofactor is Mg(2+).

Functionally, trims short 3' overhangs of a variety of RNA species, leaving a one or two nucleotide 3' overhang. Responsible for the end-turnover of tRNA: specifically removes the terminal AMP residue from uncharged tRNA (tRNA-C-C-A). Also appears to be involved in tRNA biosynthesis. In Xanthomonas axonopodis pv. citri (strain 306), this protein is Ribonuclease T.